The primary structure comprises 389 residues: Succinate--CoA ligase [ADP-forming] subunit beta (389 aa).

The 228-residue stretch at 9–236 folds into the ATP-grasp domain; it reads KELFAKHNVP…KDATDPLELK (228 aa). Residues lysine 45, 52 to 54, serine 94, and glutamate 99 contribute to the ATP site; that span reads GRG. Mg(2+) is bound by residues asparagine 191 and aspartate 205. Substrate-binding positions include asparagine 256 and 318–320; that span reads GIT.

This sequence belongs to the succinate/malate CoA ligase beta subunit family. As to quaternary structure, heterotetramer of two alpha and two beta subunits. Mg(2+) is required as a cofactor.

The catalysed reaction is succinate + ATP + CoA = succinyl-CoA + ADP + phosphate. It carries out the reaction GTP + succinate + CoA = succinyl-CoA + GDP + phosphate. It participates in carbohydrate metabolism; tricarboxylic acid cycle; succinate from succinyl-CoA (ligase route): step 1/1. Functionally, succinyl-CoA synthetase functions in the citric acid cycle (TCA), coupling the hydrolysis of succinyl-CoA to the synthesis of either ATP or GTP and thus represents the only step of substrate-level phosphorylation in the TCA. The beta subunit provides nucleotide specificity of the enzyme and binds the substrate succinate, while the binding sites for coenzyme A and phosphate are found in the alpha subunit. The sequence is that of Succinate--CoA ligase [ADP-forming] subunit beta from Mycobacteroides abscessus (strain ATCC 19977 / DSM 44196 / CCUG 20993 / CIP 104536 / JCM 13569 / NCTC 13031 / TMC 1543 / L948) (Mycobacterium abscessus).